The following is a 341-amino-acid chain: Major histocompatibility complex class I-related protein 1 (341 aa).

Positions 1 to 18 are cleaved as a signal peptide; the sequence is MMLLLPLLAVFLVKRSHT. The interval 19-105 is alpha-1; sequence RTHSLRYFRL…RHLQRHYNHS (87 aa). The segment at 19-197 is antigen-binding cleft; sequence RTHSLRYFRL…EYGRDTLERT (179 aa). Residues 19-296 are Extracellular-facing; sequence RTHSLRYFRL…APRESGDILR (278 aa). 8-(9H-purin-6-yl)-2-oxa-8-azabicyclo[3.3.1]nona-3,6-diene-4,6-dicarbaldehyde is bound by residues Tyr25 and Arg27. 5-(2-oxoethylideneamino)-6-(D-ribitylamino)uracil-binding residues include Arg27, Ser42, and Lys61. Residues Arg27, Ser42, and Lys61 each contribute to the 5-(2-oxopropylideneamino)-6-(D-ribitylamino)uracil site. Arg27, Ser42, and Lys61 together coordinate 7-hydroxy-6-methyl-8-(1-D-ribityl)lumazine. Residues Lys61 and His76 each contribute to the 8-(9H-purin-6-yl)-2-oxa-8-azabicyclo[3.3.1]nona-3,6-diene-4,6-dicarbaldehyde site. Lys61 contacts 2-amino-4-oxopteridine-6-carbaldehyde. Lys61 contributes to the pyridoxal binding site. Asn103 is a glycosylation site (N-linked (GlcNAc...) asparagine). The tract at residues 106 to 197 is alpha-2; it reads GLHTYQRMIG…EYGRDTLERT (92 aa). Arg112 is an 8-(9H-purin-6-yl)-2-oxa-8-azabicyclo[3.3.1]nona-3,6-diene-4,6-dicarbaldehyde binding site. Positions 112, 170, and 171 each coordinate 5-(2-oxoethylideneamino)-6-(D-ribitylamino)uracil. 5-(2-oxopropylideneamino)-6-(D-ribitylamino)uracil contacts are provided by Arg112, Tyr170, and Gln171. 7-hydroxy-6-methyl-8-(1-D-ribityl)lumazine is bound by residues Arg112, Tyr170, and Gln171. 2 cysteine pairs are disulfide-bonded: Cys116–Cys179 and Cys218–Cys274. The alpha-3 stretch occupies residues 198–289; sequence EHPVVRTTRK…GRQMVLEAPR (92 aa). The Ig-like C1-type domain maps to 200-301; that stretch reads PVVRTTRKET…GDILRVSTIS (102 aa). The tract at residues 290–296 is connecting peptide; sequence ESGDILR. The helical transmembrane segment at 297 to 317 threads the bilayer; sequence VSTISGTTILIIALAGVGVLI. Over 318–341 the chain is Cytoplasmic; it reads WRRSQELKEVMYQPTQVNEGSSPS.

The protein belongs to the MHC class I family. Heterotrimer that consists of MR1, B2M and metabolite antigen. Major classes of metabolite ligands presented by MR1 include riboflavin-related antigens, pyrimidines and ribityl lumazines, nucleobase adducts and folate derivatives. Forms reversible covalent Schiff base complexes with microbial pyrimidine-based metabolite, which serves as a molecular switch triggering complete folding, stable association with B2M and translocation of the ternary complex from endoplasmic reticulum to the plasma membrane. Alternatively, forms non-Schiff base complexes with ribityl lumazines. On antigen-presenting cells, the ternary complex interacts with TCR on MR1-restricted CD4- or CD8-positive T cell subsets. Interacts with TAPBP and TAPBPL chaperones in the endoplasmic reticulum. TAPBP associated or not with MHC class I peptide loading complex binds ligand-free MR1 or MR1-B2M complex, providing for stable MR1 pools ready for metabolite antigen processing. TAPBPL interacts with MR1 in a ligand-independent way; this interaction may stabilize MR1 pool and facilitate ligand loading and dissociation. Structurally, MR1-B2M heterodimer adopts a topology similar to classical MHC class I molecules, with alpha-1 and alpha-2 domains of MR1 forming the antigen-binding cleft composed of two alpha-helices resting on a floor of 7-stranded anti-parallel beta-pleated sheet. In terms of processing, N-glycosylated. In terms of tissue distribution, highly expressed thymus. Expressed in liver, kidney, spleen, heart, brain, lung, skeletal muscle and testis.

Its subcellular location is the cell membrane. It is found in the endoplasmic reticulum membrane. The protein resides in the golgi apparatus membrane. The protein localises to the early endosome membrane. It localises to the late endosome membrane. In terms of biological role, antigen-presenting molecule specialized in displaying microbial pyrimidine-based metabolites to alpha-beta T cell receptors (TCR) on innate-type mucosal-associated invariant T (MAIT) cells. In complex with B2M preferentially presents riboflavin-derived metabolites to semi-invariant TRAV1 TCRs on MAIT cells, guiding immune surveillance of the microbial metabolome at mucosal epithelial barriers. Signature pyrimidine-based microbial antigens are generated via non-enzymatic condensation of metabolite intermediates of the riboflavin pathway with by-products arising from other metabolic pathways such as glycolysis. Typical potent antigenic metabolites are 5-(2-oxoethylideneamino)-6-D-ribitylaminouracil (5-OE-RU) and 5-(2-oxopropylideneamino)-6-D-ribitylaminouracil (5-OP-RU), products of condensation of 5-amino-6-D-ribityaminouracil (5-A-RU) with glyoxal or methylglyoxal by-products, respectively. May present microbial antigens to various TRAV1-negative MAIT cell subsets, providing for unique recognition of diverse microbes, including pathogens that do not synthesize riboflavin. Upon antigen recognition, elicits rapid innate-type MAIT cell activation to eliminate pathogenic microbes by directly killing infected cells. During T cell development, drives thymic selection and post-thymic terminal differentiation of MAIT cells in a process dependent on commensal microflora. Acts as an immune sensor of cancer cell metabolome. May present a tumor-specific or -associated metabolite essential for cancer cell survival to a pan-cancer TCR on a non-MAIT CD8-positive T cell clone, triggering T cell-mediated killing of a wide range of cancer cell types. May present tumor-enriched pyridoxal and pyridoxal 5'-phosphate antigens, enabling preferential recognition of cancer cells. Presents nucleobase carbonyl adducts generated during oxidative stress. Captures M3Ade, a nucleobase adduct composed of one adenine modified by a malondialdehyde trimer, for recognition by MR1-restricted T cell clones expressing a polyclonal TCR repertoire. The sequence is that of Major histocompatibility complex class I-related protein 1 from Mus musculus (Mouse).